A 190-amino-acid polypeptide reads, in one-letter code: MPLARLVEGEKHDECTYVAASSLLIGRHKMLRSLIYASRRWSSSVGARFSSREELQAYLARPAWQPEDYLPSAEDIARQQLSEEETRKLLKLSGLPEADIQEVRRRLATQLSFVSQLQSVEVDDCADPQYAKAMQRHPAAIGYEELVRRAELDAKDTSLGEKSGSWDSTATATLKKDGYFVLREGLLQKR.

The protein belongs to the GatF family. As to quaternary structure, subunit of the heterotrimeric GatFAB amidotransferase (AdT) complex, composed of A, B and F subunits.

It is found in the mitochondrion inner membrane. It catalyses the reaction L-glutamyl-tRNA(Gln) + L-glutamine + ATP + H2O = L-glutaminyl-tRNA(Gln) + L-glutamate + ADP + phosphate + H(+). In terms of biological role, allows the formation of correctly charged Gln-tRNA(Gln) through the transamidation of misacylated Glu-tRNA(Gln) in the mitochondria. The reaction takes place in the presence of glutamine and ATP through an activated gamma-phospho-Glu-tRNA(Gln). Required for proper protein synthesis within the mitochondrion. The sequence is that of Glutamyl-tRNA(Gln) amidotransferase subunit F, mitochondrial from Eremothecium gossypii (strain ATCC 10895 / CBS 109.51 / FGSC 9923 / NRRL Y-1056) (Yeast).